The primary structure comprises 256 residues: Putative transposase for insertion sequence element IS112 (256 aa).

The protein belongs to the transposase 11 family.

Involved in the transposition of the insertion sequence IS112 which inactivates the SalI restriction-modification system. The protein is Putative transposase for insertion sequence element IS112 of Streptomyces albus G.